Here is an 893-residue protein sequence, read N- to C-terminus: Protein kintoun (893 aa).

5 disordered regions span residues 211 to 243 (KNAT…VLPM), 372 to 395 (LSRE…EEAG), 587 to 719 (EQVH…SIDD), 781 to 821 (QRKK…QQTA), and 834 to 893 (PQNN…DEDM). The segment covering 214–232 (TAEEREPHPLEHTYPKKPE) has biased composition (basic and acidic residues). At S377 the chain carries Phosphoserine. Residues 594–603 (QQEEEEEEEQ) show a composition bias toward acidic residues. Over residues 609-626 (HQHKKGNKKQRKRNKKQR) the composition is skewed to basic residues. Over residues 640 to 651 (QQQQHQKQQQQQ) the composition is skewed to low complexity. 2 stretches are compositionally biased toward polar residues: residues 656-667 (ENSSPESLNAGS) and 684-694 (FSECNDSSSVQ). Residues 709–719 (SISESSSSIDD) show a composition bias toward low complexity. A compositionally biased stretch (basic residues) spans 781-797 (QRKKNQKRRDCKLRAQQ). The residue at position 801 (S801) is a Phosphoserine. Low complexity predominate over residues 836-848 (NNNNRSYSKNNKN). Basic and acidic residues predominate over residues 865–877 (NNEEDTKRNEADA). The span at 884–893 (EMDDDDDEDM) shows a compositional bias: acidic residues.

It belongs to the PIH1 family. Kintoun subfamily. Interacts with Pp1alpha-96A, Pp1-87B, Pp1-13C and flw.

The protein localises to the cytoplasm. Functionally, required for cytoplasmic pre-assembly of axonemal dyneins, thereby playing a central role in motility in cilia and flagella. Involved in pre-assembly of dynein arm complexes in the cytoplasm before intraflagellar transport loads them for the ciliary compartment. This is Protein kintoun from Drosophila grimshawi (Hawaiian fruit fly).